The sequence spans 240 residues: ATP synthase subunit a (240 aa).

The next 5 helical transmembrane spans lie at 21–41 (LSNL…CVWG), 78–98 (IFLP…LIGV), 116–136 (DAVM…YYGI), 183–203 (ILLS…FGAA), and 212–232 (FSVF…MVYM).

The protein belongs to the ATPase A chain family. F-type ATPases have 2 components, CF(1) - the catalytic core - and CF(0) - the membrane proton channel. CF(1) has five subunits: alpha(3), beta(3), gamma(1), delta(1), epsilon(1). CF(0) has three main subunits: a(1), b(2) and c(9-12). The alpha and beta chains form an alternating ring which encloses part of the gamma chain. CF(1) is attached to CF(0) by a central stalk formed by the gamma and epsilon chains, while a peripheral stalk is formed by the delta and b chains.

It localises to the cell membrane. Functionally, key component of the proton channel; it plays a direct role in the translocation of protons across the membrane. In Oceanobacillus iheyensis (strain DSM 14371 / CIP 107618 / JCM 11309 / KCTC 3954 / HTE831), this protein is ATP synthase subunit a.